Consider the following 185-residue polypeptide: Kunitz-type serine protease inhibitor DrTI (185 aa).

Cystine bridges form between Cys-44-Cys-89 and Cys-139-Cys-147.

It belongs to the protease inhibitor I3 (leguminous Kunitz-type inhibitor) family.

The protein localises to the secreted. In terms of biological role, inhibits bovine trypsin and human plasma kallikrein. The chain is Kunitz-type serine protease inhibitor DrTI from Delonix regia (Royal poinciana).